The following is a 397-amino-acid chain: Phosphoglycerate kinase (397 aa).

Residues 21–23 (DFN), Arg-36, 59–62 (HCGR), Arg-118, and Arg-151 contribute to the substrate site. Residues Lys-201, Glu-323, and 353 to 356 (GGDT) each bind ATP.

This sequence belongs to the phosphoglycerate kinase family. Monomer.

The protein localises to the cytoplasm. The enzyme catalyses (2R)-3-phosphoglycerate + ATP = (2R)-3-phospho-glyceroyl phosphate + ADP. It functions in the pathway carbohydrate degradation; glycolysis; pyruvate from D-glyceraldehyde 3-phosphate: step 2/5. The protein is Phosphoglycerate kinase of Bartonella quintana (strain Toulouse) (Rochalimaea quintana).